A 159-amino-acid chain; its full sequence is Probable cyclic pyranopterin monophosphate synthase (159 aa).

Substrate-binding positions include 74–76 (MCH) and 110–111 (ME). Residue aspartate 125 is part of the active site.

It belongs to the MoaC family. As to quaternary structure, homohexamer; trimer of dimers.

The enzyme catalyses (8S)-3',8-cyclo-7,8-dihydroguanosine 5'-triphosphate = cyclic pyranopterin phosphate + diphosphate. It participates in cofactor biosynthesis; molybdopterin biosynthesis. Functionally, catalyzes the conversion of (8S)-3',8-cyclo-7,8-dihydroguanosine 5'-triphosphate to cyclic pyranopterin monophosphate (cPMP). The protein is Probable cyclic pyranopterin monophosphate synthase of Methanococcoides burtonii (strain DSM 6242 / NBRC 107633 / OCM 468 / ACE-M).